We begin with the raw amino-acid sequence, 190 residues long: Iron-sulfur assembly protein 1 (190 aa).

Residues 49–71 form a disordered region; sequence PSLKPSAAGSGSTAPKPVTEREI. Residues C116, C180, and C182 each coordinate Fe cation.

The protein belongs to the HesB/IscA family.

It is found in the mitochondrion matrix. Involved in the assembly of mitochondrial and cytoplasmic iron-sulfur proteins. Probably involved in the binding of an intermediate of Fe/S cluster assembly. The protein is Iron-sulfur assembly protein 1 (isa1) of Schizosaccharomyces pombe (strain 972 / ATCC 24843) (Fission yeast).